A 218-amino-acid chain; its full sequence is Glutathione S-transferase class-mu 26 kDa isozyme 7 (218 aa).

The 82-residue stretch at Pro-2 to Gly-83 folds into the GST N-terminal domain. Glutathione-binding positions include Tyr-7 to Trp-8, Trp-41 to Lys-45, Asn-54 to Leu-55, and Gln-67 to Ser-68. The 119-residue stretch at Thr-85–Leu-203 folds into the GST C-terminal domain. Substrate is bound at residue Tyr-111.

Belongs to the GST superfamily. Mu family. As to quaternary structure, homodimer.

The enzyme catalyses RX + glutathione = an S-substituted glutathione + a halide anion + H(+). In terms of biological role, conjugation of reduced glutathione to a wide number of exogenous and endogenous hydrophobic electrophiles. Functionally, GST isoenzymes appear to play a central role in the parasite detoxification system. Other functions are also suspected including a role in increasing the solubility of haematin in the parasite gut. The sequence is that of Glutathione S-transferase class-mu 26 kDa isozyme 7 from Fasciola hepatica (Liver fluke).